Consider the following 179-residue polypeptide: Large ribosomal subunit protein uL5 (179 aa).

This sequence belongs to the universal ribosomal protein uL5 family. In terms of assembly, part of the 50S ribosomal subunit; part of the 5S rRNA/L5/L18/L25 subcomplex. Contacts the 5S rRNA and the P site tRNA. Forms a bridge to the 30S subunit in the 70S ribosome.

Its function is as follows. This is one of the proteins that bind and probably mediate the attachment of the 5S RNA into the large ribosomal subunit, where it forms part of the central protuberance. In the 70S ribosome it contacts protein S13 of the 30S subunit (bridge B1b), connecting the 2 subunits; this bridge is implicated in subunit movement. Contacts the P site tRNA; the 5S rRNA and some of its associated proteins might help stabilize positioning of ribosome-bound tRNAs. This chain is Large ribosomal subunit protein uL5, found in Pseudomonas aeruginosa (strain LESB58).